Consider the following 217-residue polypeptide: MKRQSALVVFSGGQDSTTCLFWALKHYETVELVTFAYGQRHSLEIEVAKEIAQEQGLKHHVLDMSLLGQITENALTSDIEIEAEKGEVPNTFVDGRNHLFLSFAAVLAKQRGIIDIVTGVCETDFSGYPDCRDVFVKSLNVTLNLAMAYDFVIQTPLMWLDKAETWALADQLGAFDYVREKTLTCYNGIIGTGCGDCPACHLRQKGLEKYLAEKGDA.

10–20 is a binding site for ATP; the sequence is FSGGQDSTTCL. Residues C185, C194, C197, and C200 each contribute to the Zn(2+) site.

Belongs to the QueC family. In terms of assembly, homodimer. Zn(2+) is required as a cofactor.

The enzyme catalyses 7-carboxy-7-deazaguanine + NH4(+) + ATP = 7-cyano-7-deazaguanine + ADP + phosphate + H2O + H(+). It functions in the pathway purine metabolism; 7-cyano-7-deazaguanine biosynthesis. In terms of biological role, catalyzes the ATP-dependent conversion of 7-carboxy-7-deazaguanine (CDG) to 7-cyano-7-deazaguanine (preQ(0)). The chain is 7-cyano-7-deazaguanine synthase from Streptococcus thermophilus (strain CNRZ 1066).